Consider the following 267-residue polypeptide: Glucosamine-6-phosphate deaminase (267 aa).

Catalysis depends on aspartate 71, which acts as the Proton acceptor; for enolization step. The active-site For ring-opening step is the aspartate 140. Catalysis depends on histidine 142, which acts as the Proton acceptor; for ring-opening step. The For ring-opening step role is filled by glutamate 147.

It belongs to the glucosamine/galactosamine-6-phosphate isomerase family. In terms of assembly, homohexamer.

The protein resides in the cytoplasm. The enzyme catalyses alpha-D-glucosamine 6-phosphate + H2O = beta-D-fructose 6-phosphate + NH4(+). It participates in nucleotide-sugar biosynthesis; UDP-N-acetyl-alpha-D-glucosamine biosynthesis; alpha-D-glucosamine 6-phosphate from D-fructose 6-phosphate: step 1/1. Its function is as follows. Catalyzes the reversible conversion of alpha-D-glucosamine 6-phosphate (GlcN-6P) into beta-D-fructose 6-phosphate (Fru-6P) and ammonium ion, a regulatory reaction step in de novo uridine diphosphate-N-acetyl-alpha-D-glucosamine (UDP-GlcNAc) biosynthesis via hexosamine pathway. The protein is Glucosamine-6-phosphate deaminase of Caenorhabditis elegans.